A 226-amino-acid chain; its full sequence is uncharacterized protein (226 aa).

The protein to L.innocua lin2408 and lin2600.

This is an uncharacterized protein from Listeria innocua serovar 6a (strain ATCC BAA-680 / CLIP 11262).